The primary structure comprises 475 residues: Membrane-bound lytic murein transglycosylase F (475 aa).

The N-terminal stretch at 1-30 (MKKLKINYLFIGILTLLLAAALWPSIPWFG) is a signal peptide. Residues 31-269 (KTENHIAAIQ…RIEEKYLGHG (239 aa)) are non-LT domain. Residues 270 to 475 (DDFDYVDTRS…MKLAQDYPAV (206 aa)) form an LT domain region. E314 is an active-site residue.

In the N-terminal section; belongs to the bacterial solute-binding protein 3 family. The protein in the C-terminal section; belongs to the transglycosylase Slt family.

The protein localises to the cell outer membrane. The catalysed reaction is Exolytic cleavage of the (1-&gt;4)-beta-glycosidic linkage between N-acetylmuramic acid (MurNAc) and N-acetylglucosamine (GlcNAc) residues in peptidoglycan, from either the reducing or the non-reducing ends of the peptidoglycan chains, with concomitant formation of a 1,6-anhydrobond in the MurNAc residue.. Murein-degrading enzyme that degrades murein glycan strands and insoluble, high-molecular weight murein sacculi, with the concomitant formation of a 1,6-anhydromuramoyl product. Lytic transglycosylases (LTs) play an integral role in the metabolism of the peptidoglycan (PG) sacculus. Their lytic action creates space within the PG sacculus to allow for its expansion as well as for the insertion of various structures such as secretion systems and flagella. The chain is Membrane-bound lytic murein transglycosylase F from Salmonella typhi.